The following is a 440-amino-acid chain: Chromosome partition protein MukF (440 aa).

The segment at 208–236 (LSETSGTLRELQDTLEAAGDKLQANLLRI) is leucine-zipper.

Belongs to the MukF family. Interacts, and probably forms a ternary complex, with MukE and MukB via its C-terminal region. The complex formation is stimulated by calcium or magnesium. It is required for an interaction between MukE and MukB.

The protein localises to the cytoplasm. It is found in the nucleoid. Its function is as follows. Involved in chromosome condensation, segregation and cell cycle progression. May participate in facilitating chromosome segregation by condensation DNA from both sides of a centrally located replisome during cell division. Not required for mini-F plasmid partitioning. Probably acts via its interaction with MukB and MukE. Overexpression results in anucleate cells. It has a calcium binding activity. The sequence is that of Chromosome partition protein MukF from Salmonella paratyphi B (strain ATCC BAA-1250 / SPB7).